The primary structure comprises 178 residues: Methylmalonyl-CoA epimerase, mitochondrial (178 aa).

The transit peptide at 1–38 (MRRVVKAAALAAGATGLFSRVQTSVAIGRSFSTPQSQF) directs the protein to the mitochondrion. In terms of domain architecture, VOC spans 49–178 (RLNHVAVAVP…GGVLVELEQA (130 aa)). Histidine 52 contributes to the Co(2+) binding site. Residue lysine 116 is modified to N6-succinyllysine. Histidine 124 lines the Co(2+) pocket. Position 152 is an N6-acetyllysine; alternate (lysine 152). N6-succinyllysine; alternate is present on lysine 152. Glutamate 174 contacts Co(2+).

The protein belongs to the methylmalonyl-CoA epimerase family.

Its subcellular location is the mitochondrion. It catalyses the reaction (R)-methylmalonyl-CoA = (S)-methylmalonyl-CoA. Methylmalonyl-CoA epimerase involved in propionyl-CoA metabolism. The protein is Methylmalonyl-CoA epimerase, mitochondrial of Mus musculus (Mouse).